The chain runs to 194 residues: Peptidyl-tRNA hydrolase (194 aa).

Tyr-16 contacts tRNA. His-21 serves as the catalytic Proton acceptor. Phe-67, Asn-69, and Asn-115 together coordinate tRNA.

The protein belongs to the PTH family. Monomer.

It localises to the cytoplasm. It carries out the reaction an N-acyl-L-alpha-aminoacyl-tRNA + H2O = an N-acyl-L-amino acid + a tRNA + H(+). Its function is as follows. Hydrolyzes ribosome-free peptidyl-tRNAs (with 1 or more amino acids incorporated), which drop off the ribosome during protein synthesis, or as a result of ribosome stalling. In terms of biological role, catalyzes the release of premature peptidyl moieties from peptidyl-tRNA molecules trapped in stalled 50S ribosomal subunits, and thus maintains levels of free tRNAs and 50S ribosomes. The chain is Peptidyl-tRNA hydrolase from Colwellia psychrerythraea (strain 34H / ATCC BAA-681) (Vibrio psychroerythus).